Reading from the N-terminus, the 160-residue chain is Probable chemoreceptor glutamine deamidase CheD (160 aa).

It belongs to the CheD family.

It carries out the reaction L-glutaminyl-[protein] + H2O = L-glutamyl-[protein] + NH4(+). In terms of biological role, probably deamidates glutamine residues to glutamate on methyl-accepting chemotaxis receptors (MCPs), playing an important role in chemotaxis. The sequence is that of Probable chemoreceptor glutamine deamidase CheD from Desulfitobacterium hafniense (strain DSM 10664 / DCB-2).